A 227-amino-acid chain; its full sequence is dTTP/UTP pyrophosphatase (227 aa).

The interval 1 to 21 (MNDLPRAELPGSGSPNPESLI) is disordered. D87 serves as the catalytic Proton acceptor.

It belongs to the Maf family. YhdE subfamily. Requires a divalent metal cation as cofactor.

The protein resides in the cytoplasm. It carries out the reaction dTTP + H2O = dTMP + diphosphate + H(+). It catalyses the reaction UTP + H2O = UMP + diphosphate + H(+). Functionally, nucleoside triphosphate pyrophosphatase that hydrolyzes dTTP and UTP. May have a dual role in cell division arrest and in preventing the incorporation of modified nucleotides into cellular nucleic acids. In Rhodopirellula baltica (strain DSM 10527 / NCIMB 13988 / SH1), this protein is dTTP/UTP pyrophosphatase.